The sequence spans 80 residues: MILQKYNSRIMTESALKADFTDYLLNVKAIVEFVKKYFKEDPTGEDYKRFTDSVLKLLGDLIDDYVDGKLFAADGEFLAD.

This is an uncharacterized protein from Lepidoptera (butterflies and moths).